We begin with the raw amino-acid sequence, 250 residues long: Adapter protein MecA (250 aa).

Belongs to the MecA family. As to quaternary structure, homodimer.

In terms of biological role, enables the recognition and targeting of unfolded and aggregated proteins to the ClpC protease or to other proteins involved in proteolysis. The sequence is that of Adapter protein MecA from Streptococcus sanguinis (strain SK36).